Here is a 509-residue protein sequence, read N- to C-terminus: Photosystem II CP47 reaction center protein (509 aa).

6 consecutive transmembrane segments (helical) span residues 21 to 36 (SVHLMHTALVSGWAGS), 101 to 115 (IVLSGLLFLASIWHW), 140 to 156 (GIHLVLSSLLCFGFGAF), 203 to 218 (IAAGTVGILAGVFHLN), 237 to 252 (VLSSSIAAVFFASFVV), and 457 to 472 (NFALLFFFGHLWHGSR).

The protein belongs to the PsbB/PsbC family. PsbB subfamily. In terms of assembly, PSII is composed of 1 copy each of membrane proteins PsbA, PsbB, PsbC, PsbD, PsbE, PsbF, PsbH, PsbI, PsbJ, PsbK, PsbL, PsbM, PsbT, PsbY, PsbZ, Psb30/Ycf12, at least 3 peripheral proteins of the oxygen-evolving complex and a large number of cofactors. It forms dimeric complexes. It depends on Binds multiple chlorophylls. PSII binds additional chlorophylls, carotenoids and specific lipids. as a cofactor.

It is found in the plastid. Its subcellular location is the chloroplast thylakoid membrane. One of the components of the core complex of photosystem II (PSII). It binds chlorophyll and helps catalyze the primary light-induced photochemical processes of PSII. PSII is a light-driven water:plastoquinone oxidoreductase, using light energy to abstract electrons from H(2)O, generating O(2) and a proton gradient subsequently used for ATP formation. In Cyanidium caldarium (Red alga), this protein is Photosystem II CP47 reaction center protein.